The primary structure comprises 307 residues: Olfactory receptor 12D2 (307 aa).

The Extracellular segment spans residues Met-1–Pro-23. N-linked (GlcNAc...) asparagine glycosylation occurs at Asn-3. The chain crosses the membrane as a helical span at residues Phe-24–Leu-44. The Cytoplasmic segment spans residues Met-45 to Arg-52. The helical transmembrane segment at Leu-53 to Thr-73 threads the bilayer. Topologically, residues Val-74–Ser-97 are extracellular. A disulfide bridge links Cys-95 with Cys-187. The chain crosses the membrane as a helical span at residues Gln-98–Phe-118. Residues Asp-119–Gln-137 are Cytoplasmic-facing. The helical transmembrane segment at Leu-138–Ser-158 threads the bilayer. Residues Val-159–Trp-195 lie on the Extracellular side of the membrane. The helical transmembrane segment at Leu-196–Ser-215 threads the bilayer. The Cytoplasmic segment spans residues Tyr-216 to Ala-236. Residues Leu-237–Thr-257 form a helical membrane-spanning segment. At Tyr-258–Asp-270 the chain is on the extracellular side. Residues Arg-271 to Leu-291 traverse the membrane as a helical segment. The Cytoplasmic segment spans residues Arg-292–Leu-307.

Belongs to the G-protein coupled receptor 1 family.

The protein resides in the cell membrane. In terms of biological role, odorant receptor. This is Olfactory receptor 12D2 (OR12D2) from Homo sapiens (Human).